The chain runs to 287 residues: Aspartate dehydrogenase domain-containing protein (287 aa).

Phosphoserine occurs at positions 24 and 172.

Belongs to the L-aspartate dehydrogenase family.

The protein is Aspartate dehydrogenase domain-containing protein of Mus musculus (Mouse).